The primary structure comprises 2196 residues: Genome polyprotein (2196 aa).

Gly2 carries the N-myristoyl glycine; by host lipid modification. Over 2–1506 (GAQVSTQKTG…HVSRAFICLQ (1505 aa)) the chain is Cytoplasmic. The segment at 568-584 (DLQGDSEHAVESAVSRV) is amphipathic alpha-helix. Active-site for protease 2A activity residues include His883 and Asp901. Residues Cys918 and Cys920 each contribute to the Zn(2+) site. Cys972 (for protease 2A activity) is an active-site residue. Cys978 and His980 together coordinate Zn(2+). The interval 1112–1184 (NNGWLKKFTE…EQSAPSQSDQ (73 aa)) is membrane-binding. Residues 1112-1250 (NNGWLKKFTE…SPGAGKSVAT (139 aa)) are oligomerization. The RNA-binding stretch occupies residues 1133-1137 (AIKIQ). The region spanning 1216–1372 (EKKMSNYIQF…SMYSQNGKIN (157 aa)) is the SF3 helicase domain. 3 residues coordinate Zn(2+): Cys1380, Cys1392, and Cys1397. The segment at 1380–1397 (CDEECCPVNFKKCCPLVC) adopts a C4-type; degenerate zinc-finger fold. Residues 1424–1431 (EYNHRHSV) are RNA-binding. Residues 1435–1440 (LEALFQ) form an oligomerization region. The stretch at 1507-1522 (ALTTFVSVAGIIYIIY) is an intramembrane region. Over 1523-2196 (KLFAGFQGAY…TLRRKWLDSF (674 aa)) the chain is Cytoplasmic. Tyr1532 carries the O-(5'-phospho-RNA)-tyrosine modification. In terms of domain architecture, Peptidase C3 spans 1552–1730 (GPAFEFAVAM…FSAALLKHYF (179 aa)). Residues His1591, Glu1622, and Cys1698 each act as for protease 3C activity in the active site. Residues 1961–2077 (GHLIAFDYSG…SYPWPIDASL (117 aa)) enclose the RdRp catalytic domain. Asp1967 and Asp2063 together coordinate Mg(2+).

Belongs to the picornaviruses polyprotein family. In terms of assembly, interacts with capsid protein VP1 and capsid protein VP3 to form heterotrimeric protomers. Interacts with capsid protein VP0, and capsid protein VP3 to form heterotrimeric protomers. Five protomers subsequently associate to form pentamers which serve as building blocks for the capsid. Interacts with capsid protein VP2, capsid protein VP3 and capsid protein VP4 following cleavage of capsid protein VP0. As to quaternary structure, interacts with capsid protein VP1 and capsid protein VP3 in the mature capsid. In terms of assembly, interacts with capsid protein VP0 and capsid protein VP1 to form heterotrimeric protomers. Five protomers subsequently associate to form pentamers which serve as building blocks for the capsid. Interacts with capsid protein VP4 in the mature capsid. Interacts with protein 2C; this interaction may be important for virion morphogenesis. Interacts with capsid protein VP1 and capsid protein VP3. As to quaternary structure, homodimer. In terms of assembly, homohexamer; forms a hexameric ring structure with 6-fold symmetry characteristic of AAA+ ATPases. Interacts (via N-terminus) with host RTN3 (via reticulon domain); this interaction is important for viral replication. Interacts with capsid protein VP3; this interaction may be important for virion morphogenesis. Interacts with protein 3CD. As to quaternary structure, homodimer. Interacts with host GBF1. Interacts (via GOLD domain) with host ACBD3 (via GOLD domain); this interaction allows the formation of a viral protein 3A/ACBD3 heterotetramer with a 2:2 stoichiometry, which will stimulate the recruitment of host PI4KB in order to synthesize PI4P at the viral RNA replication sites. In terms of assembly, interacts with RNA-directed RNA polymerase. Interacts with protein 3AB and with RNA-directed RNA polymerase. As to quaternary structure, interacts with Viral protein genome-linked and with protein 3CD. The cofactor is Mg(2+). In terms of processing, specific enzymatic cleavages in vivo by the viral proteases yield processing intermediates and the mature proteins. Myristoylation is required for the formation of pentamers during virus assembly. Further assembly of 12 pentamers and a molecule of genomic RNA generates the provirion. Post-translationally, during virion maturation, immature virions are rendered infectious following cleavage of VP0 into VP4 and VP2. This maturation seems to be an autocatalytic event triggered by the presence of RNA in the capsid and it is followed by a conformational change infectious virion. In terms of processing, myristoylation is required during RNA encapsidation and formation of the mature virus particle. VPg is uridylylated by the polymerase into VPg-pUpU. This acts as a nucleotide-peptide primer for the genomic RNA replication.

It is found in the virion. The protein resides in the host cytoplasm. The protein localises to the host cytoplasmic vesicle membrane. Its subcellular location is the host nucleus. The enzyme catalyses a ribonucleoside 5'-triphosphate + H2O = a ribonucleoside 5'-diphosphate + phosphate + H(+). It catalyses the reaction Selective cleavage of Tyr-|-Gly bond in the picornavirus polyprotein.. The catalysed reaction is RNA(n) + a ribonucleoside 5'-triphosphate = RNA(n+1) + diphosphate. It carries out the reaction Selective cleavage of Gln-|-Gly bond in the poliovirus polyprotein. In other picornavirus reactions Glu may be substituted for Gln, and Ser or Thr for Gly.. Its activity is regulated as follows. Replication or transcription is subject to high level of random mutations by the nucleotide analog ribavirin. Functionally, forms an icosahedral capsid of pseudo T=3 symmetry with capsid proteins VP2 and VP3. The capsid is 300 Angstroms in diameter, composed of 60 copies of each capsid protein and enclosing the viral positive strand RNA genome. Capsid protein VP1 mainly forms the vertices of the capsid. Capsid protein VP1 interacts with host cell receptor to provide virion attachment to target host cells. This attachment induces virion internalization. Tyrosine kinases are probably involved in the entry process. After binding to its receptor, the capsid undergoes conformational changes. Capsid protein VP1 N-terminus (that contains an amphipathic alpha-helix) and capsid protein VP4 are externalized. Together, they shape a pore in the host membrane through which viral genome is translocated to host cell cytoplasm. In terms of biological role, forms an icosahedral capsid of pseudo T=3 symmetry with capsid proteins VP2 and VP3. The capsid is 300 Angstroms in diameter, composed of 60 copies of each capsid protein and enclosing the viral positive strand RNA genome. Lies on the inner surface of the capsid shell. After binding to the host receptor, the capsid undergoes conformational changes. Capsid protein VP4 is released, Capsid protein VP1 N-terminus is externalized, and together, they shape a pore in the host membrane through which the viral genome is translocated into the host cell cytoplasm. Its function is as follows. Component of immature procapsids, which is cleaved into capsid proteins VP4 and VP2 after maturation. Allows the capsid to remain inactive before the maturation step. Functionally, cysteine protease that cleaves viral polyprotein and specific host proteins. It is responsible for the autocatalytic cleavage between the P1 and P2 regions, which is the first cleavage occurring in the polyprotein. Also cleaves the host translation initiation factor EIF4G1, in order to shut down the capped cellular mRNA translation. Inhibits the host nucleus-cytoplasm protein and RNA trafficking by cleaving host members of the nuclear pores. Counteracts stress granule formation probably by antagonizing its assembly or promoting its dissassembly. In terms of biological role, plays an essential role in the virus replication cycle by acting as a viroporin. Creates a pore in the host endoplasmic reticulum and as a consequence releases Ca2+ in the cytoplasm of infected cell. In turn, high levels of cytoplasmic calcium may trigger membrane trafficking and transport of viral ER-associated proteins to viroplasms, sites of viral genome replication. Induces and associates with structural rearrangements of intracellular membranes. Displays RNA-binding, nucleotide binding and NTPase activities. May play a role in virion morphogenesis and viral RNA encapsidation by interacting with the capsid protein VP3. Its function is as follows. Localizes the viral replication complex to the surface of membranous vesicles. Together with protein 3CD binds the Cis-Active RNA Element (CRE) which is involved in RNA synthesis initiation. Acts as a cofactor to stimulate the activity of 3D polymerase, maybe through a nucleid acid chaperone activity. Functionally, localizes the viral replication complex to the surface of membranous vesicles. It inhibits host cell endoplasmic reticulum-to-Golgi apparatus transport and causes the disassembly of the Golgi complex, possibly through GBF1 interaction. This would result in depletion of MHC, trail receptors and IFN receptors at the host cell surface. Plays an essential role in viral RNA replication by recruiting ACBD3 and PI4KB at the viral replication sites, thereby allowing the formation of the rearranged membranous structures where viral replication takes place. In terms of biological role, acts as a primer for viral RNA replication and remains covalently bound to viral genomic RNA. VPg is uridylylated prior to priming replication into VPg-pUpU. The oriI viral genomic sequence may act as a template for this. The VPg-pUpU is then used as primer on the genomic RNA poly(A) by the RNA-dependent RNA polymerase to replicate the viral genome. During genome replication, the VPg-RNA linkage is removed by the host TDP2, thereby accelerating replication. During the late stage of the replication cycle, host TDP2 is excluded from sites of viral RNA synthesis and encapsidation, allowing for the generation of progeny virions. Involved in the viral replication complex and viral polypeptide maturation. It exhibits protease activity with a specificity and catalytic efficiency that is different from protease 3C. Protein 3CD lacks polymerase activity. Protein 3CD binds to the 5'UTR of the viral genome. Its function is as follows. Replicates the viral genomic RNA on the surface of intracellular membranes. May form linear arrays of subunits that propagate along a strong head-to-tail interaction called interface-I. Covalently attaches UMP to a tyrosine of VPg, which is used to prime RNA synthesis. The positive stranded RNA genome is first replicated at virus induced membranous vesicles, creating a dsRNA genomic replication form. This dsRNA is then used as template to synthesize positive stranded RNA genomes. ss(+)RNA genomes are either translated, replicated or encapsidated. Functionally, major viral protease that mediates proteolytic processing of the polyprotein. Cleaves host EIF5B, contributing to host translation shutoff. Also cleaves host PABPC1, contributing to host translation shutoff. Cleaves host NLRP1, triggers host N-glycine-mediated degradation of the autoinhibitory NLRP1 N-terminal fragment. This Homo sapiens (Human) protein is Genome polyprotein.